The following is a 190-amino-acid chain: RNA-binding protein OPG065 (190 aa).

The region spanning 5-70 (YIDERSNAEI…DIPPRWFMTT (66 aa)) is the Z-binding domain. The region spanning 117-184 (NPVTVINEYC…AKLAVDKLLG (68 aa)) is the DRBM domain.

Belongs to the orthopoxvirus OPG065 family. In terms of assembly, interacts with host G1P2/ISG15. Interacts with host EIF2AK2/PKR. Interacts with host ZBP1.

RNA-binding protein that plays a role in the inhibition of multiple cellular antiviral responses activated by double-stranded RNA (dsRNA), such as inhibition of PKR activation, necroptosis, and IFN-mediated antiviral activities. Recognizes and binds Z-RNA structures via its Z-binding domain and dsRNA via its DRBM domain: RNA-binding activity is required to escape host ZBP1-dependent necroptosis. Mechanistically, the Z-binding domain binds Z-RNAs that are produced during vaccinia virus infection, thereby competing with Z-RNA detection by host ZBP1, suppressing ZBP1-dependent necroptosis. Acts as a key inhibitor of the interferon response by blocking the phosphorylation and subsequent activation of IRF3 and IRF7 kinases that are required for interferon-alpha gene expression. Inhibits NF-kappa-B activation and the ubiquitin-like protein ISG15, which is an early antiviral protein. The binding with host ISG15 subsequently blocks host ISGylation. The chain is RNA-binding protein OPG065 (OPG065) from Vaccinia virus (strain Western Reserve) (VACV).